The chain runs to 236 residues: MATPHINAVPGAFAETMLFPGDPLRAKYIAETFLENVEQVTDVRNMLGFTGTYKGKRISVMGSGMGIPSASIYAYELIKEYGVKNLIRVGTCGAISTDVKVRDVIIAMGACTDSKVNRLRFKDHDFAAIADYSLLSAVVDSAKEHGTQIRVGNVFSADLFYTPDPQMFDVMEKMGVLGVEMEAAGLYGVAHELGAKALCVVTVSDHIRTGEKTTSDERQTTFNDMIIMTLDAAITL.

Position 5 (His5) interacts with a purine D-ribonucleoside. Phosphate-binding positions include Gly21, Arg25, Arg44, and 88–91 (RVGT). Residues 180–182 (EME) and 204–205 (SD) each bind a purine D-ribonucleoside. Residue Asp205 is the Proton donor of the active site.

Belongs to the PNP/UDP phosphorylase family. In terms of assembly, homohexamer; trimer of homodimers.

It carries out the reaction a purine D-ribonucleoside + phosphate = a purine nucleobase + alpha-D-ribose 1-phosphate. The catalysed reaction is a purine 2'-deoxy-D-ribonucleoside + phosphate = a purine nucleobase + 2-deoxy-alpha-D-ribose 1-phosphate. Catalyzes the reversible phosphorolytic breakdown of the N-glycosidic bond in the beta-(deoxy)ribonucleoside molecules, with the formation of the corresponding free purine bases and pentose-1-phosphate. In Shewanella denitrificans (strain OS217 / ATCC BAA-1090 / DSM 15013), this protein is Purine nucleoside phosphorylase DeoD-type.